Consider the following 339-residue polypeptide: Ketol-acid reductoisomerase (NADP(+)) (339 aa).

Residues 1 to 182 form the KARI N-terminal Rossmann domain; it reads MRVYYDRDAD…GGGRAGVIET (182 aa). NADP(+)-binding positions include 24–27, Arg48, Ser51, Thr53, and 83–86; these read YGSQ and DELQ. His108 is a catalytic residue. Gly134 contacts NADP(+). One can recognise a KARI C-terminal knotted domain in the interval 183 to 328; it reads TFKEECETDL…EKLRAMMPWI (146 aa). The Mg(2+) site is built by Asp191, Glu195, Glu227, and Glu231. Ser252 lines the substrate pocket.

This sequence belongs to the ketol-acid reductoisomerase family. It depends on Mg(2+) as a cofactor.

It carries out the reaction (2R)-2,3-dihydroxy-3-methylbutanoate + NADP(+) = (2S)-2-acetolactate + NADPH + H(+). The enzyme catalyses (2R,3R)-2,3-dihydroxy-3-methylpentanoate + NADP(+) = (S)-2-ethyl-2-hydroxy-3-oxobutanoate + NADPH + H(+). Its pathway is amino-acid biosynthesis; L-isoleucine biosynthesis; L-isoleucine from 2-oxobutanoate: step 2/4. It participates in amino-acid biosynthesis; L-valine biosynthesis; L-valine from pyruvate: step 2/4. Involved in the biosynthesis of branched-chain amino acids (BCAA). Catalyzes an alkyl-migration followed by a ketol-acid reduction of (S)-2-acetolactate (S2AL) to yield (R)-2,3-dihydroxy-isovalerate. In the isomerase reaction, S2AL is rearranged via a Mg-dependent methyl migration to produce 3-hydroxy-3-methyl-2-ketobutyrate (HMKB). In the reductase reaction, this 2-ketoacid undergoes a metal-dependent reduction by NADPH to yield (R)-2,3-dihydroxy-isovalerate. The sequence is that of Ketol-acid reductoisomerase (NADP(+)) from Xanthobacter autotrophicus (strain ATCC BAA-1158 / Py2).